The chain runs to 633 residues: CDK5 and ABL1 enzyme substrate 1 (633 aa).

Low complexity predominate over residues 1-29 (MAAAAAAATTAACSSGSAGTDAAGASGLQ). Residues 1 to 99 (MAAAAAAATT…EGGAAKPGAG (99 aa)) are disordered. The tract at residues 1–109 (MAAAAAAATT…GACGARTRFS (109 aa)) is interaction with TDRD7. Over residues 51–61 (PPRKPRMDPRR) the composition is skewed to basic and acidic residues. Residues Ser-168 and Ser-287 each carry the phosphoserine modification. The interval 179 to 492 (QWQPPRPAPL…TTVIDYVKPS (314 aa)) is interaction with CDK3. Residue Ser-313 is modified to Phosphoserine; by CDK2 and CDK3. Residue Thr-415 is modified to Phosphothreonine.

This sequence belongs to the cyclin family. As to quaternary structure, found in a complex with p53/TP53. Found in a number of complexes with CDK2, CDK3, CDK5, ABL1, TDRD7, CDK17, CCNA1, CCNE1 and TP73. Interacts with CDK2, CDK3, CDK5, ABL1 and TDRD7. In terms of processing, phosphorylated on Ser-313 by CCNE1/CDK3. Phosphorylated on serine/threonine residues by CDK5 and on tyrosine residues by ABL1. Also phosphorylated in vitro by CCNA1/CDK2, CCNE1/CDK2, CCNA1/CDK3 and CCNE1/CDK3. Expressed in breast, pancreas, colon, head and neck (at protein level). Strongly decreased in more than half of cases of atypical endometrial hyperplasia and in more than 90% of endometrial cancers.

It is found in the nucleus. It localises to the cytoplasm. In terms of biological role, cyclin-dependent kinase binding protein. Enhances cyclin-dependent kinase tyrosine phosphorylation by nonreceptor tyrosine kinases, such as that of CDK5 by activated ABL1, which leads to increased CDK5 activity and is critical for neuronal development, and that of CDK2 by WEE1, which leads to decreased CDK2 activity and growth inhibition. Positively affects neuronal outgrowth. Plays a role as a regulator for p53/p73-induced cell death. The chain is CDK5 and ABL1 enzyme substrate 1 (CABLES1) from Homo sapiens (Human).